Consider the following 127-residue polypeptide: Fluoride-specific ion channel FluC (127 aa).

4 helical membrane-spanning segments follow: residues 7-27, 37-57, 70-90, and 102-122; these read LFLI…LTLL, FGTL…LAMF, FFVT…AEVI, and ITIT…GVFI. Residues glycine 77 and threonine 80 each coordinate Na(+).

Belongs to the fluoride channel Fluc/FEX (TC 1.A.43) family.

It localises to the cell inner membrane. The enzyme catalyses fluoride(in) = fluoride(out). With respect to regulation, na(+) is not transported, but it plays an essential structural role and its presence is essential for fluoride channel function. In terms of biological role, fluoride-specific ion channel. Important for reducing fluoride concentration in the cell, thus reducing its toxicity. This is Fluoride-specific ion channel FluC from Histophilus somni (strain 129Pt) (Haemophilus somnus).